The sequence spans 352 residues: Quinolinate synthase (352 aa).

Residues H48 and S69 each contribute to the iminosuccinate site. Residue C114 coordinates [4Fe-4S] cluster. Residues 140-142 (YAN) and S157 contribute to the iminosuccinate site. C201 is a binding site for [4Fe-4S] cluster. Iminosuccinate is bound by residues 227–229 (HPE) and T244. Residue C298 participates in [4Fe-4S] cluster binding.

Belongs to the quinolinate synthase family. Type 1 subfamily. Requires [4Fe-4S] cluster as cofactor.

Its subcellular location is the cytoplasm. It catalyses the reaction iminosuccinate + dihydroxyacetone phosphate = quinolinate + phosphate + 2 H2O + H(+). Its pathway is cofactor biosynthesis; NAD(+) biosynthesis; quinolinate from iminoaspartate: step 1/1. Functionally, catalyzes the condensation of iminoaspartate with dihydroxyacetone phosphate to form quinolinate. The protein is Quinolinate synthase of Ectopseudomonas mendocina (strain ymp) (Pseudomonas mendocina).